The primary structure comprises 327 residues: Phenylalanine--tRNA ligase alpha subunit (327 aa).

Mg(2+) is bound at residue Glu-252.

It belongs to the class-II aminoacyl-tRNA synthetase family. Phe-tRNA synthetase alpha subunit type 1 subfamily. As to quaternary structure, tetramer of two alpha and two beta subunits. Requires Mg(2+) as cofactor.

It localises to the cytoplasm. It carries out the reaction tRNA(Phe) + L-phenylalanine + ATP = L-phenylalanyl-tRNA(Phe) + AMP + diphosphate + H(+). This is Phenylalanine--tRNA ligase alpha subunit from Cronobacter sakazakii (strain ATCC BAA-894) (Enterobacter sakazakii).